Here is a 269-residue protein sequence, read N- to C-terminus: Ribonuclease HII (269 aa).

One can recognise an RNase H type-2 domain in the interval Tyr83–Leu269. Residues Asp89, Glu90, and Asp185 each contribute to the a divalent metal cation site.

The protein belongs to the RNase HII family. Mn(2+) is required as a cofactor. Requires Mg(2+) as cofactor.

It is found in the cytoplasm. It catalyses the reaction Endonucleolytic cleavage to 5'-phosphomonoester.. Its function is as follows. Endonuclease that specifically degrades the RNA of RNA-DNA hybrids. This Clostridium botulinum (strain Langeland / NCTC 10281 / Type F) protein is Ribonuclease HII.